The chain runs to 327 residues: Malate dehydrogenase (327 aa).

An NAD(+)-binding site is contributed by 12 to 18 (GAAGQIA). Substrate contacts are provided by R93 and R99. NAD(+) is bound by residues N106, Q113, and 130–132 (VGN). Substrate-binding residues include N132 and R163. H188 functions as the Proton acceptor in the catalytic mechanism.

It belongs to the LDH/MDH superfamily. MDH type 2 family.

The enzyme catalyses (S)-malate + NAD(+) = oxaloacetate + NADH + H(+). Its function is as follows. Catalyzes the reversible oxidation of malate to oxaloacetate. The polypeptide is Malate dehydrogenase (Burkholderia mallei (strain NCTC 10247)).